The primary structure comprises 511 residues: Gap junction alpha-3 protein (511 aa).

Residues 2–15 (GDWSFLGRLLENAQ) lie within the membrane without spanning it. Topologically, residues 16–19 (EHST) are cytoplasmic. A helical membrane pass occupies residues 20–40 (VIGKVWLTVLFIFRILVLGAA). Residues 41 to 71 (AEEVWGDEQSDFTCNTQQPGCENVCYDKAFP) lie on the Extracellular side of the membrane. Cystine bridges form between cysteine 54–cysteine 214, cysteine 61–cysteine 208, and cysteine 65–cysteine 203. The chain crosses the membrane as a helical span at residues 72–92 (ISHIRFWVLQIIFVSTPTLIY). Topologically, residues 93-174 (LGHVLHIVRM…GALLRTYIFN (82 aa)) are cytoplasmic. Positions 110–119 (EEELKKRGSV) are enriched in basic and acidic residues. Positions 110–143 (EEELKKRGSVKDNNYPGAATSGGGSGGGNNFKDP) are disordered. The span at 129-138 (TSGGGSGGGN) shows a compositional bias: gly residues. The chain crosses the membrane as a helical span at residues 175–195 (IIFKTLFEVGFIVGQYFLYGF). The Extracellular portion of the chain corresponds to 196–223 (ELKPVYQCSRPPCPHTVDCFISRPTEKT). Residues 224–244 (IFIIFMLVVASVSLLLNMLEI) traverse the membrane as a helical segment. Over 245–511 (YHLGWKKLKQ…SRARSDDLAV (267 aa)) the chain is Cytoplasmic. Residues 397–511 (AEQQGKAPSS…SRARSDDLAV (115 aa)) are disordered. 2 stretches are compositionally biased toward low complexity: residues 403–415 (APSSSAGSSTPSS) and 440–456 (TTTNSGSSTSLSGASGS).

The protein belongs to the connexin family. In terms of assembly, a hemichannel or connexon is composed of a hexamer of connexins. A functional gap junction is formed by the apposition of two hemichannels. During early stages of lens development, interacts with the C-terminus of MIP. In terms of tissue distribution, detected in eye lens.

Its subcellular location is the cell membrane. The protein localises to the cell junction. The protein resides in the gap junction. Its function is as follows. Structural component of lens fiber gap junctions. Gap junctions are dodecameric channels that connect the cytoplasm of adjoining cells. They are formed by the docking of two hexameric hemichannels, one from each cell membrane. Small molecules and ions diffuse from one cell to a neighboring cell via the central pore. In Gallus gallus (Chicken), this protein is Gap junction alpha-3 protein (GJA3).